A 162-amino-acid chain; its full sequence is Large ribosomal subunit protein bL17 (162 aa).

Residues 125-140 (AAKEAPAKEVAEEKAA) show a composition bias toward basic and acidic residues. The segment at 125 to 162 (AAKEAPAKEVAEEKAAKPAKKAAPKKAEKEEAEDAAEA) is disordered.

Belongs to the bacterial ribosomal protein bL17 family. In terms of assembly, part of the 50S ribosomal subunit. Contacts protein L32.

This is Large ribosomal subunit protein bL17 from Oleidesulfovibrio alaskensis (strain ATCC BAA-1058 / DSM 17464 / G20) (Desulfovibrio alaskensis).